The chain runs to 182 residues: ATP synthase subunit delta (182 aa).

The protein belongs to the ATPase delta chain family. In terms of assembly, F-type ATPases have 2 components, F(1) - the catalytic core - and F(0) - the membrane proton channel. F(1) has five subunits: alpha(3), beta(3), gamma(1), delta(1), epsilon(1). F(0) has three main subunits: a(1), b(2) and c(10-14). The alpha and beta chains form an alternating ring which encloses part of the gamma chain. F(1) is attached to F(0) by a central stalk formed by the gamma and epsilon chains, while a peripheral stalk is formed by the delta and b chains.

It localises to the cell membrane. In terms of biological role, f(1)F(0) ATP synthase produces ATP from ADP in the presence of a proton or sodium gradient. F-type ATPases consist of two structural domains, F(1) containing the extramembraneous catalytic core and F(0) containing the membrane proton channel, linked together by a central stalk and a peripheral stalk. During catalysis, ATP synthesis in the catalytic domain of F(1) is coupled via a rotary mechanism of the central stalk subunits to proton translocation. Functionally, this protein is part of the stalk that links CF(0) to CF(1). It either transmits conformational changes from CF(0) to CF(1) or is implicated in proton conduction. This chain is ATP synthase subunit delta, found in Lactobacillus johnsonii (strain CNCM I-12250 / La1 / NCC 533).